Here is a 371-residue protein sequence, read N- to C-terminus: MSVVERIWWGHRAAPGEAVLLAPLLLAEGLFRAGAAARGALYDSGLLAQARAGVPVISIGNVAVGGAGKTPAAIAVSARLAARGRRVAVLSRGYGASRRDARVVSDGAHVLLGAGEAGDEPALLARRLPGVAVLCGPRRAALAATAVTTLGADALVLDDGFQHRALARDLDVVVLDAANPFGNGHLLPRGPNREPRAALRRAGLVWLSRVDQADEVALEALRALALEATGRAPVESRHAPVDVVDGTLARSLGREALRGARVLALSGLARPGAFRRTLADLGAEVVGERAFPDHHRFTDRELDEALRAAEAAGARAVTTEKDAVRLAPARAADPRLCAVRIDAELVRGEDHLAQSLDAALARGDVLSRSAG.

Residue 63–70 participates in ATP binding; sequence AVGGAGKT.

This sequence belongs to the LpxK family.

It carries out the reaction a lipid A disaccharide + ATP = a lipid IVA + ADP + H(+). The protein operates within glycolipid biosynthesis; lipid IV(A) biosynthesis; lipid IV(A) from (3R)-3-hydroxytetradecanoyl-[acyl-carrier-protein] and UDP-N-acetyl-alpha-D-glucosamine: step 6/6. Functionally, transfers the gamma-phosphate of ATP to the 4'-position of a tetraacyldisaccharide 1-phosphate intermediate (termed DS-1-P) to form tetraacyldisaccharide 1,4'-bis-phosphate (lipid IVA). In Anaeromyxobacter sp. (strain Fw109-5), this protein is Tetraacyldisaccharide 4'-kinase.